A 100-amino-acid chain; its full sequence is MTKVTPTSLADLIRRPIVTEKATLLLENNQYVFEVDPRATKPQIKAAIEELFEVKVTGISTSNMPIKKKRIGKFIGHKAQYKRATVTLAPEFTINLFPEV.

It belongs to the universal ribosomal protein uL23 family. In terms of assembly, part of the 50S ribosomal subunit. Contacts protein L29, and trigger factor when it is bound to the ribosome.

Its function is as follows. One of the early assembly proteins it binds 23S rRNA. One of the proteins that surrounds the polypeptide exit tunnel on the outside of the ribosome. Forms the main docking site for trigger factor binding to the ribosome. The sequence is that of Large ribosomal subunit protein uL23 from Acaryochloris marina (strain MBIC 11017).